The following is a 528-amino-acid chain: Membrane protein insertase YidC (528 aa).

The next 5 membrane-spanning stretches (helical) occupy residues 13–33 (ILLA…FFIP), 336–356 (WGWA…PLTY), 406–426 (LPIL…LNAI), 446–466 (YFIL…ITPM), and 481–501 (PVIF…YWFV).

Belongs to the OXA1/ALB3/YidC family. Type 1 subfamily. Interacts with the Sec translocase complex via SecD. Specifically interacts with transmembrane segments of nascent integral membrane proteins during membrane integration.

It is found in the cell inner membrane. Its function is as follows. Required for the insertion and/or proper folding and/or complex formation of integral membrane proteins into the membrane. Involved in integration of membrane proteins that insert both dependently and independently of the Sec translocase complex, as well as at least some lipoproteins. Aids folding of multispanning membrane proteins. This Campylobacter jejuni subsp. jejuni serotype O:2 (strain ATCC 700819 / NCTC 11168) protein is Membrane protein insertase YidC.